The chain runs to 441 residues: N-succinylarginine dihydrolase (441 aa).

Residues Ala-19–Ser-28, Asn-110, and His-137–Arg-138 contribute to the substrate site. Glu-174 is an active-site residue. Arg-212 is a binding site for substrate. His-248 is an active-site residue. Asp-250 and Asn-359 together coordinate substrate. Cys-365 serves as the catalytic Nucleophile.

Belongs to the succinylarginine dihydrolase family. As to quaternary structure, homodimer.

It carries out the reaction N(2)-succinyl-L-arginine + 2 H2O + 2 H(+) = N(2)-succinyl-L-ornithine + 2 NH4(+) + CO2. The protein operates within amino-acid degradation; L-arginine degradation via AST pathway; L-glutamate and succinate from L-arginine: step 2/5. Functionally, catalyzes the hydrolysis of N(2)-succinylarginine into N(2)-succinylornithine, ammonia and CO(2). The chain is N-succinylarginine dihydrolase from Cronobacter sakazakii (strain ATCC BAA-894) (Enterobacter sakazakii).